The primary structure comprises 316 residues: Pantothenate kinase (316 aa).

G99–S106 provides a ligand contact to ATP.

Belongs to the prokaryotic pantothenate kinase family.

It localises to the cytoplasm. The catalysed reaction is (R)-pantothenate + ATP = (R)-4'-phosphopantothenate + ADP + H(+). The protein operates within cofactor biosynthesis; coenzyme A biosynthesis; CoA from (R)-pantothenate: step 1/5. In Pasteurella multocida (strain Pm70), this protein is Pantothenate kinase (coaA).